The following is a 155-amino-acid chain: Ribosomal RNA large subunit methyltransferase H (155 aa).

Residues Leu-73, Gly-104, and 123-128 (LSPLTL) contribute to the S-adenosyl-L-methionine site.

Belongs to the RNA methyltransferase RlmH family. In terms of assembly, homodimer.

The protein resides in the cytoplasm. It carries out the reaction pseudouridine(1915) in 23S rRNA + S-adenosyl-L-methionine = N(3)-methylpseudouridine(1915) in 23S rRNA + S-adenosyl-L-homocysteine + H(+). In terms of biological role, specifically methylates the pseudouridine at position 1915 (m3Psi1915) in 23S rRNA. The polypeptide is Ribosomal RNA large subunit methyltransferase H (Pseudomonas savastanoi pv. phaseolicola (strain 1448A / Race 6) (Pseudomonas syringae pv. phaseolicola (strain 1448A / Race 6))).